The sequence spans 151 residues: Calmodulin (151 aa).

EF-hand domains are found at residues 10–45 (EQIS…LGQN), 46–81 (PTEA…KMKD), 83–118 (DSEE…LGEK), and 119–151 (LTDE…MLSK). Aspartate 23, aspartate 25, aspartate 27, serine 29, glutamate 34, aspartate 59, aspartate 61, asparagine 63, threonine 65, glutamate 70, aspartate 96, aspartate 98, asparagine 100, glutamate 107, aspartate 132, aspartate 134, aspartate 136, and glutamate 143 together coordinate Ca(2+).

The protein belongs to the calmodulin family.

In terms of biological role, calmodulin mediates the control of a large number of enzymes, ion channels and other proteins by Ca(2+). Among the enzymes to be stimulated by the calmodulin-Ca(2+) complex are a number of protein kinases and phosphatases. The protein is Calmodulin of Pneumocystis carinii.